A 217-amino-acid chain; its full sequence is Elongation factor Ts (217 aa).

The tract at residues 82–85 (TDFV) is involved in Mg(2+) ion dislocation from EF-Tu.

This sequence belongs to the EF-Ts family.

It localises to the cytoplasm. In terms of biological role, associates with the EF-Tu.GDP complex and induces the exchange of GDP to GTP. It remains bound to the aminoacyl-tRNA.EF-Tu.GTP complex up to the GTP hydrolysis stage on the ribosome. This Desulforamulus reducens (strain ATCC BAA-1160 / DSM 100696 / MI-1) (Desulfotomaculum reducens) protein is Elongation factor Ts.